The sequence spans 581 residues: Threonine--tRNA ligase (581 aa).

The catalytic stretch occupies residues 185-478 (DHRKLGKELD…LVEHYGGAFP (294 aa)). Residues cysteine 278, histidine 329, and histidine 455 each contribute to the Zn(2+) site.

It belongs to the class-II aminoacyl-tRNA synthetase family. As to quaternary structure, homodimer. The cofactor is Zn(2+).

It localises to the cytoplasm. It carries out the reaction tRNA(Thr) + L-threonine + ATP = L-threonyl-tRNA(Thr) + AMP + diphosphate + H(+). Functionally, catalyzes the attachment of threonine to tRNA(Thr) in a two-step reaction: L-threonine is first activated by ATP to form Thr-AMP and then transferred to the acceptor end of tRNA(Thr). Also edits incorrectly charged L-seryl-tRNA(Thr). This is Threonine--tRNA ligase from Borreliella burgdorferi (strain ATCC 35210 / DSM 4680 / CIP 102532 / B31) (Borrelia burgdorferi).